The following is a 442-amino-acid chain: Inner membrane protein PPF-1, chloroplastic (442 aa).

The Lumenal portion of the chain corresponds to methionine 1–glycine 108. The chain crosses the membrane as a helical span at residues leucine 109–valine 129. Residues lysine 130 to proline 183 lie on the Stromal side of the membrane. The helical transmembrane segment at leucine 184–leucine 204 threads the bilayer. At serine 205–phenylalanine 296 the chain is on the lumenal side. The chain crosses the membrane as a helical span at residues leucine 297–phenylalanine 317. The Stromal segment spans residues threonine 318–alanine 442. Disordered regions lie at residues alanine 350–lysine 371 and proline 390–alanine 442. Basic and acidic residues predominate over residues serine 358 to lysine 371. The span at glutamate 414–phenylalanine 427 shows a compositional bias: polar residues. Positions arginine 431 to alanine 442 are enriched in basic residues.

This sequence belongs to the OXA1/ALB3/YidC (TC 2.A.9.2) family. In terms of tissue distribution, highly expressed in apical buds. Low levels of expression in leaves. Not expressed in roots, and stems.

Its subcellular location is the plastid. It localises to the chloroplast thylakoid membrane. Functionally, may be required for the insertion of some integral membrane proteins into the chloroplast thylakoid membrane. May play a role in inhibiting senescence. This is Inner membrane protein PPF-1, chloroplastic (PPF-1) from Pisum sativum (Garden pea).